The chain runs to 169 residues: Crossover junction endodeoxyribonuclease RuvC (169 aa).

Residues D12, E72, and D144 contribute to the active site. Residues D12, E72, and D144 each contribute to the Mg(2+) site.

The protein belongs to the RuvC family. As to quaternary structure, homodimer which binds Holliday junction (HJ) DNA. The HJ becomes 2-fold symmetrical on binding to RuvC with unstacked arms; it has a different conformation from HJ DNA in complex with RuvA. In the full resolvosome a probable DNA-RuvA(4)-RuvB(12)-RuvC(2) complex forms which resolves the HJ. Requires Mg(2+) as cofactor.

Its subcellular location is the cytoplasm. The catalysed reaction is Endonucleolytic cleavage at a junction such as a reciprocal single-stranded crossover between two homologous DNA duplexes (Holliday junction).. In terms of biological role, the RuvA-RuvB-RuvC complex processes Holliday junction (HJ) DNA during genetic recombination and DNA repair. Endonuclease that resolves HJ intermediates. Cleaves cruciform DNA by making single-stranded nicks across the HJ at symmetrical positions within the homologous arms, yielding a 5'-phosphate and a 3'-hydroxyl group; requires a central core of homology in the junction. The consensus cleavage sequence is 5'-(A/T)TT(C/G)-3'. Cleavage occurs on the 3'-side of the TT dinucleotide at the point of strand exchange. HJ branch migration catalyzed by RuvA-RuvB allows RuvC to scan DNA until it finds its consensus sequence, where it cleaves and resolves the cruciform DNA. This is Crossover junction endodeoxyribonuclease RuvC from Xanthobacter autotrophicus (strain ATCC BAA-1158 / Py2).